Here is an 82-residue protein sequence, read N- to C-terminus: Mu-conotoxin GVIIJ (82 aa).

A signal peptide spans 1 to 22; that stretch reads MKLTCVVIVAALLLTACQLITA. Residues 23–47 constitute a propeptide that is removed on maturation; the sequence is LDCGGTQKHRALRSTIKLSLLRQHR. W49 bears the 6'-bromotryptophan mark. Cystine bridges form between C50-C65, C57-C69, and C64-C76. A 4-hydroxyproline modification is found at P53. A protein is bound at residue C71.

Belongs to the conotoxin O1 superfamily. In terms of processing, cys-71 is a key residue that tethers to the channel by covalent attachment, leading to nearly irreversible inhibition (k(off) very low). In order to determine the solution structure without dimerization, this residue was mutated to Cys. As to expression, expressed by the venom duct.

The protein localises to the secreted. In terms of biological role, mu-conotoxins block voltage-gated sodium channels (Nav). This toxin (GVIIJ(SSG)) blocks Nav1.1/SCN1A (Kd=11 nM), Nav1.2/SCN2A (Kd=11 nM), Nav1.3/SCN3A (Kd=15 nM), Nav1.4/SCN4A (Kd=4.7 nM), Nav1.6/SCN8A (Kd=360 nM) and Nav1.7/SCN9A (Kd=41 nM). It binds the channel at the newly described site 8, which is composed by two surfaces whose one contains a non-disulfide-bonded cysteine (which is free to covalently bind the toxin Cys-71). It is noteworthy that coexpression of subunits beta-2 or beta-4 (but not beta-1 or beta-3) protects rNav1.1-1.7 against block by the toxin, since these subunits (thanks to their extracellular domain) covalently bind to the key cysteine of the channel, thus preventing the covalent binding of the toxin. This chain is Mu-conotoxin GVIIJ, found in Conus geographus (Geography cone).